Here is a 396-residue protein sequence, read N- to C-terminus: MKIKTGARILALSALTTMMFSASALAKIEEGKLVIWINGDKGYNGLAEVGKKFEKDTGIKVSVEHPDKLEEKFPQVAATGDGPDIIFWAHDRFGAYAQSGLLAEITPDKAFQDKLYPFTWDAVRYNGKLIAYPVAVEALSLIYNKDLVPNPPKTWEEIPALDKALKAKGKSALMFNLQEPYFTWPLIAADGGYAFKFENGKYDVKNVGVDSAGAKAGLTFLVDLIKNKHMNADTDYSIAEAAFNKGETAMTINGPWAWSNIDKSKVNYGVTLLPTFKGKPSKPFVGVLSAGINAASPNKELAKEFLENYLMTDPGLEAVNNDKPLGAVAVKSFQEKLEKDPRIAATMANAQKGEIMPNIPQMSAFWYAVRTAVINAASARQTVDAALKDAQGRITK.

Positions 1-26 (MKIKTGARILALSALTTMMFSASALA) are cleaved as a signal peptide.

Belongs to the bacterial solute-binding protein 1 family. In terms of assembly, the complex is composed of two ATP-binding proteins (MalK), two transmembrane proteins (MalG and MalF) and a solute-binding protein (MalE).

The protein resides in the periplasm. Part of the ABC transporter complex MalEFGK involved in maltose/maltodextrin import. Binds maltose and higher maltodextrins. In Klebsiella aerogenes (Enterobacter aerogenes), this protein is Maltose/maltodextrin-binding periplasmic protein (malE).